Consider the following 140-residue polypeptide: RxLR effector protein CRE9 (140 aa).

An N-terminal signal peptide occupies residues 1–24 (MRTSVFVALVVATFVATCISFTSA). The RxLR-dEER motif lies at 43 to 61 (RTLAEADDWWLASTNTEER). Residues 119–139 (LKILYGALLAGLIIVGVEAML) traverse the membrane as a helical segment.

This sequence belongs to the RxLR effector family.

The protein localises to the secreted. It localises to the host cell. Its subcellular location is the membrane. In terms of biological role, effector that is involved in host plant infection. Contributes to virulence during the early infection stage, by inhibiting plant defense responses induced by both PAMP-triggered immunity (PTI) and effector-triggered immunity (ETI). This is RxLR effector protein CRE9 from Phytophthora infestans (strain T30-4) (Potato late blight agent).